The sequence spans 599 residues: Glucose-6-phosphate 1-dehydrogenase 3, chloroplastic (599 aa).

Residues 1 to 18 (MSSLSCPTYRSRTSSSSP) show a composition bias toward low complexity. Positions 1-23 (MSSLSCPTYRSRTSSSSPFLSNH) are disordered. The transit peptide at 1–66 (MSSLSCPTYR…RSQRRSVQSS (66 aa)) directs the protein to the chloroplast. Val67 carries the N-acetylvaline modification. NADP(+) contacts are provided by residues 119–126 (GASGDLAK) and Arg153. A disulfide bridge links Cys171 with Cys179. An NADP(+)-binding site is contributed by Lys256. D-glucose 6-phosphate contacts are provided by residues Lys256, 286-290 (HYLGK), Glu324, and Asp343. The active-site Proton acceptor is the His348. An NADP(+)-binding site is contributed by Lys441. 2 residues coordinate D-glucose 6-phosphate: Lys444 and Arg449. Positions 454 and 483 each coordinate NADP(+). Gln485 provides a ligand contact to D-glucose 6-phosphate. NADP(+) is bound by residues 491–493 (YLK) and Arg576.

The protein belongs to the glucose-6-phosphate dehydrogenase family. In terms of assembly, forms homodimer. Interacts with G6PD1. As to expression, expressed in roots, flowers and siliques.

It localises to the plastid. The protein localises to the chloroplast stroma. It catalyses the reaction D-glucose 6-phosphate + NADP(+) = 6-phospho-D-glucono-1,5-lactone + NADPH + H(+). It participates in carbohydrate degradation; pentose phosphate pathway; D-ribulose 5-phosphate from D-glucose 6-phosphate (oxidative stage): step 1/3. With respect to regulation, regulated by metabolites. Post-translationally inactivated by cysteine-mediated redox modification via the ferredoxin-thioredoxin system in the light and this avoids futile cycles with photosynthetic CO2 fixation. Functionally, catalyzes the rate-limiting step of the oxidative pentose-phosphate pathway, which represents a route for the dissimilation of carbohydrates besides glycolysis. The main function of this enzyme is to provide reducing power (NADPH) and pentose phosphates for fatty acid and nucleic acid synthesis which are involved in membrane synthesis and cell division. In Arabidopsis thaliana (Mouse-ear cress), this protein is Glucose-6-phosphate 1-dehydrogenase 3, chloroplastic.